The chain runs to 270 residues: Protein-ADP-ribose hydrolase (270 aa).

A Macro domain is found at 73-267; that stretch reads VSVKDCQKTN…LYDTYLQKEN (195 aa). ADP-D-ribose contacts are provided by D92, I93, and N106. Residues C112, H117, and C119 each coordinate Zn(2+). Residues C119, I120, D121, S212, T213, G214, E215, and F216 each coordinate ADP-D-ribose.

The protein belongs to the MacroD-type family. Zn-Macro subfamily. The cofactor is Zn(2+).

It carries out the reaction 4-O-(ADP-D-ribosyl)-L-aspartyl-[protein] + H2O = L-aspartyl-[protein] + ADP-D-ribose + H(+). Functionally, ADP-ribosylhydrolase that specifically reverses the SirTM-mediated mono-ADP-ribosylation at an asparatate residue of GcvH-L, by releasing ADP-ribose from the target protein. May play a role in the regulation of the response to host-induced oxidative stress. The polypeptide is Protein-ADP-ribose hydrolase (Streptococcus pyogenes serotype M6 (strain ATCC BAA-946 / MGAS10394)).